The sequence spans 75 residues: Small ribosomal subunit protein bS18 (75 aa).

The protein belongs to the bacterial ribosomal protein bS18 family. Part of the 30S ribosomal subunit. Forms a tight heterodimer with protein bS6.

Binds as a heterodimer with protein bS6 to the central domain of the 16S rRNA, where it helps stabilize the platform of the 30S subunit. The chain is Small ribosomal subunit protein bS18 from Aliivibrio fischeri (strain ATCC 700601 / ES114) (Vibrio fischeri).